The following is a 425-amino-acid chain: Formyl-CoA:oxalate CoA-transferase (425 aa).

CoA is bound by residues 17–18 (QS), Arg-38, 72–75 (LDTK), 96–98 (NFG), Arg-104, and 136–139 (KVYE). Asp-168 serves as the catalytic Nucleophile. 247 to 249 (GGQ) is a binding site for substrate.

The protein belongs to the CoA-transferase III family. Frc subfamily. Homodimer.

It catalyses the reaction formyl-CoA + oxalate = oxalyl-CoA + formate. It functions in the pathway metabolic intermediate degradation; oxalate degradation; CO(2) and formate from oxalate: step 1/2. In terms of biological role, involved in the catabolism of oxalate and in the adapatation to low pH via the induction of the oxalate-dependent acid tolerance response (ATR). Catalyzes the transfer of the CoA moiety from formyl-CoA to oxalate. This chain is Formyl-CoA:oxalate CoA-transferase, found in Bradyrhizobium diazoefficiens (strain JCM 10833 / BCRC 13528 / IAM 13628 / NBRC 14792 / USDA 110).